The sequence spans 417 residues: MSSKYPRSVRRCLPLWALTLEAALILLFYFFTHYDASLEDQKGLVASYQVGQDLTVMAAIGLGFLTSSFRRHSWSSVAFNLFMLALGVQWAILLDGFLSQFPSGKVVITLFSIRLATMSALSVLISVDAVLGKVNLAQLVVMVLVEVTALGNLRMVISNIFNTDYHMNMMHIYVFAAYFGLSVAWCLPKPLPEGTEDKDQTATIPSLSAMLGALFLWMFWPSFNSALLRSPIERKNAVFNTYYAVAVSVVTAISGSSLAHPQGKISKTYVHSAVLAGGVAVGTSCHLIPSPWLAMVLGLVAGLISVGGAKYLPGCCNRVLGIPHSSIMGYNFSLLGLLGEIIYIVLLVLDTVGAGNGMIGFQVLLSIGELSLAIVIALMSGLLTGLLLNLKIWKAPHEAKYFDDQVFWKFPHLAVGF.

Helical transmembrane passes span Cys12–Thr32, Leu44–Phe64, Val77–Phe97, Val107–Val127, Val130–Leu150, Met167–Leu187, Thr203–Phe223, Val238–Leu258, Leu287–Gly307, Leu334–Ala354, and Met358–Leu378.

This sequence belongs to the ammonium transporter (TC 2.A.49) family. Rh subfamily. Palmitoylated. Restricted to tissues or cell lines expressing erythroid characters.

It is found in the cell membrane. Functionally, may be part of an oligomeric complex which is likely to have a transport or channel function in the erythrocyte membrane. The polypeptide is Blood group Rh(D) polypeptide (RHD) (Homo sapiens (Human)).